The following is a 415-amino-acid chain: Serine hydroxymethyltransferase (415 aa).

Residues Leu-121 and 125-127 contribute to the (6S)-5,6,7,8-tetrahydrofolate site; that span reads GHL. Lys-229 is modified (N6-(pyridoxal phosphate)lysine).

The protein belongs to the SHMT family. As to quaternary structure, homodimer. Pyridoxal 5'-phosphate serves as cofactor.

The protein resides in the cytoplasm. The enzyme catalyses (6R)-5,10-methylene-5,6,7,8-tetrahydrofolate + glycine + H2O = (6S)-5,6,7,8-tetrahydrofolate + L-serine. Its pathway is one-carbon metabolism; tetrahydrofolate interconversion. The protein operates within amino-acid biosynthesis; glycine biosynthesis; glycine from L-serine: step 1/1. Its function is as follows. Catalyzes the reversible interconversion of serine and glycine with tetrahydrofolate (THF) serving as the one-carbon carrier. This reaction serves as the major source of one-carbon groups required for the biosynthesis of purines, thymidylate, methionine, and other important biomolecules. Also exhibits THF-independent aldolase activity toward beta-hydroxyamino acids, producing glycine and aldehydes, via a retro-aldol mechanism. In Bordetella petrii (strain ATCC BAA-461 / DSM 12804 / CCUG 43448), this protein is Serine hydroxymethyltransferase.